We begin with the raw amino-acid sequence, 180 residues long: Large ribosomal subunit protein uL5 (180 aa).

Belongs to the universal ribosomal protein uL5 family. Part of the 50S ribosomal subunit; part of the 5S rRNA/L5/L18/L25 subcomplex. Contacts the 5S rRNA and the P site tRNA. Forms a bridge to the 30S subunit in the 70S ribosome.

In terms of biological role, this is one of the proteins that bind and probably mediate the attachment of the 5S RNA into the large ribosomal subunit, where it forms part of the central protuberance. In the 70S ribosome it contacts protein S13 of the 30S subunit (bridge B1b), connecting the 2 subunits; this bridge is implicated in subunit movement. Contacts the P site tRNA; the 5S rRNA and some of its associated proteins might help stabilize positioning of ribosome-bound tRNAs. In Ralstonia pickettii (strain 12J), this protein is Large ribosomal subunit protein uL5.